Here is a 661-residue protein sequence, read N- to C-terminus: Heme transporter BhuA (661 aa).

The N-terminal stretch at 1 to 23 (MKFTRTLVLASTSLLATVATSQA) is a signal peptide. Positions 48–159 (KDNIEATGGT…AAGAIRYETV (112 aa)) constitute a TBDR plug domain. In terms of domain architecture, TBDR beta-barrel spans 170 to 661 (TFGARIIGSY…TFTFQTAFKF (492 aa)).

The protein belongs to the TonB-dependent receptor family.

It localises to the cell outer membrane. In terms of biological role, heme transporter. The protein is Heme transporter BhuA (bhuA) of Brucella ovis (strain ATCC 25840 / 63/290 / NCTC 10512).